We begin with the raw amino-acid sequence, 629 residues long: tRNA uridine 5-carboxymethylaminomethyl modification enzyme MnmG (629 aa).

Gly13–Gly18 is an FAD binding site. NAD(+) is bound at residue Gly273 to Phe287.

Belongs to the MnmG family. As to quaternary structure, homodimer. Heterotetramer of two MnmE and two MnmG subunits. It depends on FAD as a cofactor.

The protein localises to the cytoplasm. Functionally, NAD-binding protein involved in the addition of a carboxymethylaminomethyl (cmnm) group at the wobble position (U34) of certain tRNAs, forming tRNA-cmnm(5)s(2)U34. The protein is tRNA uridine 5-carboxymethylaminomethyl modification enzyme MnmG of Photorhabdus laumondii subsp. laumondii (strain DSM 15139 / CIP 105565 / TT01) (Photorhabdus luminescens subsp. laumondii).